The chain runs to 206 residues: uncharacterized protein (206 aa).

A signal peptide spans 1–22 (MPKLRLIGLTLLALSATAVSHA). An SH3b domain is found at 23 to 89 (EETRYVSDEL…IPLKQLSTEP (67 aa)). The chain crosses the membrane as a helical span at residues 169-191 (IIMQWFMYGGGVLGLGLLLGLVL).

The protein to H.influenzae HI_1605.

It localises to the membrane. This is an uncharacterized protein from Escherichia coli O157:H7.